The following is a 469-amino-acid chain: RNA-editing ligase 1, mitochondrial (469 aa).

The N-terminal 44 residues, 1–44, are a transit peptide targeting the mitochondrion; sequence MQLQRLGAPLLKRLVGGCIRQSTAPIMPCVVVSGSGVFLTPVRT. Residues 59-61, 86-92, R111, E159, F209, and 307-309 each bind ATP; these read IEI, EKVHGTN, and KLR. Residue K87 is the N6-AMP-lysine intermediate of the active site. The disordered stretch occupies residues 450-469; the sequence is AAAQSEAIPPLSPAAPTKGE.

This sequence belongs to the RNA ligase 2 family. In terms of assembly, component of the RNA editing complex (editosome), a 1600 kDa complex composed of at least 20 proteins. Interacts with terminal uridylyltransferase MEAT1.

Its subcellular location is the mitochondrion. The catalysed reaction is ATP + (ribonucleotide)n-3'-hydroxyl + 5'-phospho-(ribonucleotide)m = (ribonucleotide)n+m + AMP + diphosphate.. Essential for RNA editing. RNA editing in kinetoplastid mitochondria inserts and deletes uridylates at multiple sites in pre-mRNAs as directed by guide RNAs. This Trypanosoma brucei brucei protein is RNA-editing ligase 1, mitochondrial (REL1).